The sequence spans 322 residues: Phosphoserine phosphatase (322 aa).

10-12 lines the substrate pocket; it reads PED. Mg(2+) contacts are provided by aspartate 12, aspartate 116, and aspartate 118. Aspartate 116 serves as the catalytic Nucleophile. Catalysis depends on aspartate 118, which acts as the Proton donor. Substrate-binding positions include glutamate 125, arginine 161, 204-205, and lysine 249; that span reads SG. Aspartate 272 contributes to the Mg(2+) binding site. Substrate is bound at residue asparagine 275.

It belongs to the HAD-like hydrolase superfamily. SerB family. Mg(2+) serves as cofactor.

It catalyses the reaction O-phospho-L-serine + H2O = L-serine + phosphate. The enzyme catalyses O-phospho-D-serine + H2O = D-serine + phosphate. It participates in amino-acid biosynthesis; L-serine biosynthesis; L-serine from 3-phospho-D-glycerate: step 3/3. Its function is as follows. Catalyzes the dephosphorylation of phosphoserine (P-Ser). The protein is Phosphoserine phosphatase (serB) of Escherichia coli O157:H7.